The primary structure comprises 693 residues: Golgin subfamily A member 6A (693 aa).

A coiled-coil region spans residues 14–611; that stretch reads LEESRQNKLA…KLLELQELVL (598 aa). 3 disordered regions span residues 20 to 69, 497 to 547, and 661 to 693; these read NKLA…PGDS, LPGE…GTEQ, and NVEPAPGAAREGSPHDNPTVQQIVQLSPVMQDT. Positions 54–69 are enriched in polar residues; the sequence is SPETTTSGGCHSPGDS. Positions 537 to 547 are enriched in basic and acidic residues; it reads LPKEKADGTEQ. Polar residues predominate over residues 676 to 693; that stretch reads DNPTVQQIVQLSPVMQDT.

This sequence belongs to the GOLGA6 family. Highly expressed in seminiferous tubes in testis. Highly expressed in spermatids, barely detectable in late pachytene spermatocytes, and not detectable in spermatogonia. Detected at intermediate levels in pancreas and lymph nodes, and at much lower levels in spleen, peripheral blood leukocytes, skeletal muscle, liver, lung, placenta, brain and heart.

This Homo sapiens (Human) protein is Golgin subfamily A member 6A (GOLGA6A).